A 333-amino-acid polypeptide reads, in one-letter code: Transmembrane protein I329L (333 aa).

The first 31 residues, 1 to 31 (MLRVFIFFVFLGSGLTGRIKPQITCKYFISE), serve as a signal peptide directing secretion. Residues Asn32, Asn39, Asn44, Asn76, Asn82, and Asn101 are each glycosylated (N-linked (GlcNAc...) asparagine; by host). Over 32 to 239 (NNTWYKYNVT…NTERYKSCYP (208 aa)) the chain is Extracellular. The LRR repeat unit spans residues 112 to 133 (ELKFLDLRYNDLQVIEYNILRK). Residues Asn181, Asn185, and Asn219 are each glycosylated (N-linked (GlcNAc...) asparagine; by host). An intrachain disulfide couples Cys195 to Cys237. A helical membrane pass occupies residues 240–260 (LVFISILCSCISFLFLFICLL). Over 261–333 (RSICKKYSCT…EKKVSCSRRK (73 aa)) the chain is Cytoplasmic.

It belongs to the asfivirus I329L family. Post-translationally, highly glycosylated.

The protein localises to the host endoplasmic reticulum membrane. It is found in the host Golgi apparatus membrane. Its function is as follows. Viral TLR3 homolog that probably prevents TLR3 dimerization and subsequent induction of IFN. Inhibits dsRNA-stimulated activation of NF-kB and IRF3. This is Transmembrane protein I329L from Ornithodoros (relapsing fever ticks).